Reading from the N-terminus, the 205-residue chain is MSQLIKDPTNLGLVPVVIEQTARGERSFDIYSRLLKERVIFMIGQVEDHMANLIVAQMLFLESENPDKDIHLYINSPGGSVTAGMSIYDTMQFIKPDVSTMCIGQAASMGAFLLTAGAAGKRFALPNARVMIHQPLGGFQGQASDIEIHAKEILKIKGQLNSLLAHHTGQPIEQLEKDTDRDNFMSADEAKEYGIIDAVLSQRPV.

The active-site Nucleophile is S108. H133 is an active-site residue.

Belongs to the peptidase S14 family. Fourteen ClpP subunits assemble into 2 heptameric rings which stack back to back to give a disk-like structure with a central cavity, resembling the structure of eukaryotic proteasomes.

It localises to the cytoplasm. It carries out the reaction Hydrolysis of proteins to small peptides in the presence of ATP and magnesium. alpha-casein is the usual test substrate. In the absence of ATP, only oligopeptides shorter than five residues are hydrolyzed (such as succinyl-Leu-Tyr-|-NHMec, and Leu-Tyr-Leu-|-Tyr-Trp, in which cleavage of the -Tyr-|-Leu- and -Tyr-|-Trp bonds also occurs).. In terms of biological role, cleaves peptides in various proteins in a process that requires ATP hydrolysis. Has a chymotrypsin-like activity. Plays a major role in the degradation of misfolded proteins. The polypeptide is ATP-dependent Clp protease proteolytic subunit (Alcanivorax borkumensis (strain ATCC 700651 / DSM 11573 / NCIMB 13689 / SK2)).